Here is a 670-residue protein sequence, read N- to C-terminus: DNA ligase (670 aa).

NAD(+) contacts are provided by residues Asp-32–Asp-36, Ser-81–Leu-82, and Glu-114. The active-site N6-AMP-lysine intermediate is the Lys-116. NAD(+)-binding residues include Arg-137, Glu-174, Lys-291, and Lys-315. Cys-409, Cys-412, Cys-427, and Cys-433 together coordinate Zn(2+). The BRCT domain maps to Ala-592–Arg-670.

The protein belongs to the NAD-dependent DNA ligase family. LigA subfamily. It depends on Mg(2+) as a cofactor. The cofactor is Mn(2+).

It carries out the reaction NAD(+) + (deoxyribonucleotide)n-3'-hydroxyl + 5'-phospho-(deoxyribonucleotide)m = (deoxyribonucleotide)n+m + AMP + beta-nicotinamide D-nucleotide.. Its function is as follows. DNA ligase that catalyzes the formation of phosphodiester linkages between 5'-phosphoryl and 3'-hydroxyl groups in double-stranded DNA using NAD as a coenzyme and as the energy source for the reaction. It is essential for DNA replication and repair of damaged DNA. This is DNA ligase from Haemophilus influenzae (strain ATCC 51907 / DSM 11121 / KW20 / Rd).